We begin with the raw amino-acid sequence, 545 residues long: Putative serine/threonine-protein kinase L673 (545 aa).

The 113-residue stretch at 13-125 (RLGLVNWMLN…YKVYYLTIWK (113 aa)) folds into the Cyclin N-terminal domain. The Protein kinase domain maps to 264 to 543 (IDFQNKLGSG…NCLKKIKESF (280 aa)). ATP contacts are provided by residues 270-278 (LGSGTYGSV) and Lys291. The Proton acceptor role is filled by Asp384.

It belongs to the protein kinase superfamily. Ser/Thr protein kinase family.

The catalysed reaction is L-seryl-[protein] + ATP = O-phospho-L-seryl-[protein] + ADP + H(+). It carries out the reaction L-threonyl-[protein] + ATP = O-phospho-L-threonyl-[protein] + ADP + H(+). The polypeptide is Putative serine/threonine-protein kinase L673 (Acanthamoeba polyphaga (Amoeba)).